The following is a 337-amino-acid chain: GTP 3',8-cyclase (337 aa).

A Radical SAM core domain is found at 17–243 (PFQRQYYYLR…HKSHTDGPAK (227 aa)). Residue Arg26 participates in GTP binding. [4Fe-4S] cluster-binding residues include Cys33 and Cys37. Residue Tyr39 participates in S-adenosyl-L-methionine binding. Cys40 serves as a coordination point for [4Fe-4S] cluster. Arg76 contacts GTP. Gly80 contributes to the S-adenosyl-L-methionine binding site. Thr107 is a binding site for GTP. An S-adenosyl-L-methionine-binding site is contributed by Ser131. Position 168 (Lys168) interacts with GTP. Residue Met202 participates in S-adenosyl-L-methionine binding. Residues Cys265 and Cys268 each contribute to the [4Fe-4S] cluster site. 270 to 272 (RLR) is a GTP binding site. A [4Fe-4S] cluster-binding site is contributed by Cys282.

This sequence belongs to the radical SAM superfamily. MoaA family. Monomer and homodimer. [4Fe-4S] cluster serves as cofactor.

The catalysed reaction is GTP + AH2 + S-adenosyl-L-methionine = (8S)-3',8-cyclo-7,8-dihydroguanosine 5'-triphosphate + 5'-deoxyadenosine + L-methionine + A + H(+). It participates in cofactor biosynthesis; molybdopterin biosynthesis. Functionally, catalyzes the cyclization of GTP to (8S)-3',8-cyclo-7,8-dihydroguanosine 5'-triphosphate. The sequence is that of GTP 3',8-cyclase from Haemophilus influenzae (strain PittGG).